A 298-amino-acid polypeptide reads, in one-letter code: uncharacterized protein (298 aa).

The first 19 residues, 1-19 (MFRKFLFIQLLIVTSLVKA), serve as a signal peptide directing secretion. The disordered stretch occupies residues 278 to 298 (RNNPPLKNNNAKSKNSYETYK). Residues 279–298 (NNPPLKNNNAKSKNSYETYK) are compositionally biased toward low complexity.

To R.prowazekii RP296.

This is an uncharacterized protein from Rickettsia prowazekii (strain Madrid E).